A 154-amino-acid polypeptide reads, in one-letter code: 3-hydroxyacyl-[acyl-carrier-protein] dehydratase FabZ (154 aa).

The active site involves His57.

Belongs to the thioester dehydratase family. FabZ subfamily.

Its subcellular location is the cytoplasm. It carries out the reaction a (3R)-hydroxyacyl-[ACP] = a (2E)-enoyl-[ACP] + H2O. Involved in unsaturated fatty acids biosynthesis. Catalyzes the dehydration of short chain beta-hydroxyacyl-ACPs and long chain saturated and unsaturated beta-hydroxyacyl-ACPs. The polypeptide is 3-hydroxyacyl-[acyl-carrier-protein] dehydratase FabZ (Sinorhizobium fredii (strain NBRC 101917 / NGR234)).